We begin with the raw amino-acid sequence, 707 residues long: Acetyl-coenzyme A synthetase 1 (707 aa).

CoA contacts are provided by residues 242–245 and Thr-361; that span reads RGGK. ATP-binding positions include 437 to 439, 461 to 466, Asp-553, and Arg-568; these read GEP and DTYWQT. Residue Ser-576 participates in CoA binding. Arg-579 contacts ATP. Arg-644 contributes to the CoA binding site. Residues 705–707 carry the Microbody targeting signal motif; that stretch reads VKL.

This sequence belongs to the ATP-dependent AMP-binding enzyme family.

The protein resides in the microsome. Its subcellular location is the endoplasmic reticulum. It carries out the reaction acetate + ATP + CoA = acetyl-CoA + AMP + diphosphate. Its function is as follows. May be required for assimilation of ethanol and acetate. The protein is Acetyl-coenzyme A synthetase 1 (ACS1) of Kluyveromyces lactis (strain ATCC 8585 / CBS 2359 / DSM 70799 / NBRC 1267 / NRRL Y-1140 / WM37) (Yeast).